The following is a 483-amino-acid chain: Proline--tRNA ligase (483 aa).

This sequence belongs to the class-II aminoacyl-tRNA synthetase family. ProS type 3 subfamily. In terms of assembly, homodimer.

Its subcellular location is the cytoplasm. The enzyme catalyses tRNA(Pro) + L-proline + ATP = L-prolyl-tRNA(Pro) + AMP + diphosphate. Catalyzes the attachment of proline to tRNA(Pro) in a two-step reaction: proline is first activated by ATP to form Pro-AMP and then transferred to the acceptor end of tRNA(Pro). This chain is Proline--tRNA ligase, found in Sulfurisphaera tokodaii (strain DSM 16993 / JCM 10545 / NBRC 100140 / 7) (Sulfolobus tokodaii).